The following is a 692-amino-acid chain: Transforming growth factor beta activator LRRC33 (692 aa).

The signal sequence occupies residues 1–24; the sequence is MEFLPLWLCLGFHFLIVEWRSGRG. The Extracellular portion of the chain corresponds to 25-650; sequence TATAASQGGC…CKWGQVDTGL (626 aa). The 28-residue stretch at 29 to 56 folds into the LRRNT domain; it reads ASQGGCKVVDRVADCRSLNLASVPSGLP. LRR repeat units follow at residues 58 to 79, 82 to 103, 106 to 127, 133 to 155, 158 to 179, 182 to 203, 206 to 227, 228 to 239, 251 to 272, and 273 to 294; these read HSRMLVLDANPLRVLWNHSLQA, RLEDLSLHSCHLDRISHWAFHE, HLQNLVLADNRLSENYKESATA, RLRRLDLSGNSLTEDMAALMLQN, SLEVVSLARNTLMRLDDSVFEG, RLVELDLQRNYIFEIEGGAFDG, ELRRLNLAYNNLPCIVDFSLTQ, LRFLNVSYNILE, ELEILDLSHNQLLFFPLLPQCG, and KLHTLLLQDNSMGFYRELYNTS. N-linked (GlcNAc...) asparagine glycosylation occurs at asparagine 74. An N-linked (GlcNAc...) asparagine glycan is attached at asparagine 155. Asparagine 232 carries N-linked (GlcNAc...) asparagine glycosylation. N-linked (GlcNAc...) asparagine glycans are attached at residues asparagine 292, asparagine 309, and asparagine 312. LRR repeat units follow at residues 329 to 350, 353 to 374, 377 to 398, 403 to 424, 427 to 448, 463 to 484, 486 to 507, 512 to 533, 537 to 558, 559 to 580, and 585 to 605; these read ALRFLDMSQNQLRHLPDGFLKK, SLSHLNLNQNCLTKLHIREHEP, ALTELDLSRNQLAELHLAPGLT, NLRVFNLSSNQLLGVPTGLFHS, SITTLDMSHNQISLCPQTVPLD, SLRSLSLDGCGLKALQDCPFQG, SLTHLDLSSNWGILNGSVSPLS, TLQVLSLRNVGLGSGAAEMDFS, NLRELDLSGNSLTSFPKFKGSS, ALQTLDLRRNSLTALPQRVVSE, and GLQTIYLSQNPYDCCGVEGWG. Asparagine 408 carries N-linked (GlcNAc...) asparagine glycosylation. Residue asparagine 500 is glycosylated (N-linked (GlcNAc...) asparagine). The region spanning 606-643 is the LRRCT domain; it reads ALQHFKTIADLSMVTCNLSSKIIRVVELPEGIPQDCKW. A glycan (N-linked (GlcNAc...) asparagine) is linked at asparagine 622. The chain crosses the membrane as a helical span at residues 651–671; it reads FYLVLILPSCLTLLVASTVIF. At 672-692 the chain is on the cytoplasmic side; the sequence is LTFKKPLLQVIKSRCHWSSIY.

Belongs to the LRRC32/LRRC33 family. In terms of assembly, interacts (via LRR repeats) with TLR2, TLR3, TLR4, TLR9 and probably other Toll-like receptors. Interacts with CYBB/NOX2; the interaction is direct. Interacts with TGFB1; associates via disulfide bonds with the Latency-associated peptide chain (LAP) regulatory chain of TGFB1, leading to regulate activation of TGF-beta-1.

It is found in the cell membrane. The protein localises to the endoplasmic reticulum membrane. Its function is as follows. Key regulator of transforming growth factor beta-1 (TGFB1) specifically required for microglia function in the nervous system. Required for activation of latent TGF-beta-1 in macrophages and microglia: associates specifically via disulfide bonds with the Latency-associated peptide (LAP), which is the regulatory chain of TGFB1, and regulates integrin-dependent activation of TGF-beta-1. TGF-beta-1 activation mediated by LRRC33/NRROS is highly localized: there is little spreading of TGF-beta-1 activated from one microglial cell to neighboring microglia, suggesting the existence of localized and selective activation of TGF-beta-1 by LRRC33/NRROS. Indirectly plays a role in Toll-like receptor (TLR) signaling: ability to inhibit TLR-mediated NF-kappa-B activation and cytokine production is probably a consequence of its role in TGF-beta-1 signaling. The protein is Transforming growth factor beta activator LRRC33 of Rattus norvegicus (Rat).